Here is a 317-residue protein sequence, read N- to C-terminus: Cytochrome c biogenesis protein CcsA (317 aa).

Helical transmembrane passes span 9-29 (ILTH…LITF), 46-63 (TATA…WVYS), 71-91 (LYES…IFDF), 98-118 (LSAI…SGFL), 143-163 (MVLG…LLVI), 225-245 (IISL…VWAN), 258-273 (ETWA…IYLH), and 286-306 (AIVA…VNLL).

It belongs to the CcmF/CycK/Ccl1/NrfE/CcsA family. In terms of assembly, may interact with Ccs1.

The protein localises to the plastid. It localises to the chloroplast thylakoid membrane. Required during biogenesis of c-type cytochromes (cytochrome c6 and cytochrome f) at the step of heme attachment. The sequence is that of Cytochrome c biogenesis protein CcsA from Citrus sinensis (Sweet orange).